A 345-amino-acid chain; its full sequence is MSKQKNDTFLRACRGEKTDYVPVWYMRQAGRSQPEYRALKEKYSLFEITHQPELCAYVTRLPVEQYHVDAAILYKDIMSPLPAIGVDVEIKAGVGPVIANPIRSLADVEKLGEIHPEEDVPYVLETIKLLTTEQLNVPLIGFAGAPFTLASYMIEGGPSKNYNKTKAFMYAEPKAWFALMDKLADMTIRYVKAQIRAGASAIQIFDSWVGAVNVDDYRTFIKPTMARIFAALREENVPLIMFGVGASHLAKEWNDLPLDVIGLDWRLSIREARERGITKALQGNLDPAVLLAPWEVIEKRVKQILDEGMEQPGYIFNLGHGIFPEIQPETLKRLTAFIHDYTSRK.

Substrate contacts are provided by residues 27 to 31 (RQAGR), phenylalanine 46, aspartate 76, tyrosine 152, serine 207, and histidine 320.

It belongs to the uroporphyrinogen decarboxylase family. In terms of assembly, homodimer.

It is found in the cytoplasm. It carries out the reaction uroporphyrinogen III + 4 H(+) = coproporphyrinogen III + 4 CO2. It participates in porphyrin-containing compound metabolism; protoporphyrin-IX biosynthesis; coproporphyrinogen-III from 5-aminolevulinate: step 4/4. Its function is as follows. Catalyzes the decarboxylation of four acetate groups of uroporphyrinogen-III to yield coproporphyrinogen-III. The protein is Uroporphyrinogen decarboxylase of Geobacillus sp. (strain WCH70).